A 419-amino-acid chain; its full sequence is Putative actin-fragmin kinase DDB_G0279609 (419 aa).

A disordered region spans residues 73-94 (INNNNNSINNNNNNNNKNKNKN).

It belongs to the protein kinase superfamily. AFK Ser/Thr protein kinase family.

In Dictyostelium discoideum (Social amoeba), this protein is Putative actin-fragmin kinase DDB_G0279609.